The sequence spans 486 residues: FAD-dependent oxidoreductase domain-containing protein 1 (486 aa).

The chain crosses the membrane as a helical span at residues 66 to 82 (VVIVGGGVLGLSVAYWL).

In terms of assembly, associates with components of the mitochondrial respiratory chain complex I. It depends on FAD as a cofactor.

It localises to the mitochondrion inner membrane. Functionally, required for the assembly of the mitochondrial membrane respiratory chain NADH dehydrogenase (Complex I). Involved in mid-late stages of complex I assembly. The chain is FAD-dependent oxidoreductase domain-containing protein 1 (FOXRED1) from Bos taurus (Bovine).